Here is a 413-residue protein sequence, read N- to C-terminus: Serine/threonine transporter SstT (413 aa).

The next 9 membrane-spanning stretches (helical) occupy residues 22 to 42, 61 to 81, 89 to 109, 148 to 168, 189 to 209, 224 to 244, 305 to 325, 337 to 357, and 363 to 383; these read GLLL…VLGF, AVAP…KQLG, IVVL…LFSF, ALFN…GIAL, IVHF…AETL, LVVL…ILVF, MAGA…TLGI, VVAS…LLLI, and LFGI…VIGV.

The protein belongs to the dicarboxylate/amino acid:cation symporter (DAACS) (TC 2.A.23) family.

It is found in the cell inner membrane. The catalysed reaction is L-serine(in) + Na(+)(in) = L-serine(out) + Na(+)(out). The enzyme catalyses L-threonine(in) + Na(+)(in) = L-threonine(out) + Na(+)(out). In terms of biological role, involved in the import of serine and threonine into the cell, with the concomitant import of sodium (symport system). This Histophilus somni (strain 129Pt) (Haemophilus somnus) protein is Serine/threonine transporter SstT.